Consider the following 278-residue polypeptide: UPF0276 protein Shew_2240 (278 aa).

The protein belongs to the UPF0276 family.

The protein is UPF0276 protein Shew_2240 of Shewanella loihica (strain ATCC BAA-1088 / PV-4).